Reading from the N-terminus, the 205-residue chain is Peroxynitrite isomerase (205 aa).

A disordered region spans residues M1–Q23. The short motif at G52–G58 is the GXWXGXG element. Heme b contacts are provided by T63, K168, and H195.

The protein belongs to the nitrobindin family. As to quaternary structure, homodimer. It depends on heme b as a cofactor.

It catalyses the reaction peroxynitrite = nitrate. Its pathway is nitrogen metabolism. Heme-binding protein able to scavenge peroxynitrite and to protect free L-tyrosine against peroxynitrite-mediated nitration, by acting as a peroxynitrite isomerase that converts peroxynitrite to nitrate. Therefore, this protein likely plays a role in peroxynitrite sensing and in the detoxification of reactive nitrogen and oxygen species (RNS and ROS, respectively). Is able to bind nitric oxide (NO) in vitro, but may act as a sensor of peroxynitrite levels in vivo. This chain is Peroxynitrite isomerase, found in Mycobacteroides abscessus (strain ATCC 19977 / DSM 44196 / CCUG 20993 / CIP 104536 / JCM 13569 / NCTC 13031 / TMC 1543 / L948) (Mycobacterium abscessus).